Here is a 302-residue protein sequence, read N- to C-terminus: GATA transcription factor 28 (302 aa).

The disordered stretch occupies residues 47-66; sequence NAGGMSEGVETDIPSHPGNV. The region spanning 77-112 is the Tify domain; sequence GSEQGDQLTLSFQGQVYVFDSVLPEKVQAVLLLLGG. The interval 119–141 is disordered; sequence APPGLGSPHQNNRVSSLPGTPQR. Over residues 126 to 141 the composition is skewed to polar residues; the sequence is PHQNNRVSSLPGTPQR. The 43-residue stretch at 147-189 folds into the CCT domain; it reads RLASLVRFREKRKGRNFDKKIRYTVRKEVALRMQRNKGQFTSA. The segment at 217–273 adopts a GATA-type zinc-finger fold; that stretch reads QHQEISCRHCGIGEKSTPMMRRGPAGPRTLCNACGLMWANKGAFRDLSKASPQTAQN.

It belongs to the type IV zinc-finger family. Class C subfamily. Predominantly expressed in shoot apices, inflorescences and roots.

Its subcellular location is the nucleus. In terms of biological role, transcriptional activator that specifically binds 5'-GATA-3' or 5'-GAT-3' motifs within gene promoters. The polypeptide is GATA transcription factor 28 (GATA28) (Arabidopsis thaliana (Mouse-ear cress)).